Reading from the N-terminus, the 322-residue chain is Heat-inducible transcription repressor HrcA (322 aa).

It belongs to the HrcA family.

Its function is as follows. Negative regulator of class I heat shock genes (grpE-dnaK-dnaJ and groELS operons). Prevents heat-shock induction of these operons. This chain is Heat-inducible transcription repressor HrcA, found in Staphylococcus carnosus (strain TM300).